The following is a 281-amino-acid chain: Merozoite surface protein 1 (281 aa).

An N-terminal signal peptide occupies residues 1 to 19 (MKIIFFLCSFLFFIINTQC). Residues 63 to 100 (ASAQSGASAQSGASAQSGASAQSGTSGPSGPSGTSPSS) show a composition bias toward low complexity. Residues 63-126 (ASAQSGASAQ…PADASDSDAK (64 aa)) are disordered. The segment covering 101-110 (RSNTLPRSNT) has biased composition (polar residues). N-linked (GlcNAc...) asparagine glycosylation is present at Asn-109. Residues 111–120 (SSGASPPADA) are compositionally biased toward low complexity. A glycan (N-linked (GlcNAc...) asparagine) is linked at Asn-248.

As to quaternary structure, forms a complex composed of subunits p83, p30, p38, and p42 which remain non-covalently associated; the complex is formed at the merozoite surface prior to egress from host erythrocytes. Forms a complex composed of processed MSP1 subunits, MSP6 subunit p36 and MSP7; the complex is formed at the merozoite surface prior to egress from host erythrocytes. Within the complex, interacts (via subunit p38) with MSP6 subunit p36 and (via subunits p83, p30 and p38) with MSP7 (via subunit p22). Forms a complex composed of MSP1, MSP6, DBLMSP1 and DBLMSP2. Within the complex, interacts (via subunit p38) with DBLMSP1 and DBLMSP2. Forms a complex composed of MSP1, and rhoptry proteins RhopH3, RAP1 and CLAG9/RhopH3. Within the complex, interacts (via subunits p42 and p19) with RhopH3 (via C-terminus). Forms a complex composed of MSP1, MSP6, MSP7, MSP9 and MSP3; within the complex, MSP6 and MSP9 mediate the binding to the host erythrocyte. Interacts (via subunits p19 and p42) with MSP9; the interaction is direct; MSP1 subunits p19 or p42, and MSP9 form a co-ligand complex that interacts with host SLC4A1/Band 3 protein. May interact with PFD6. Interacts with host spectrin. Post-translationally, the p190 precursor is cleaved by SUB1 prior to merozoite egress into 4 subunits p83, p30, p38, and p42 which remain non-covalently associated. SUB1-mediated proteolytic cleavage occurs in an orderly manner; the first cleavage occurs at the p30/p38 site, followed by cleavage at the p83/p30 site, the last cleavage occurs at the p38/p42 site. The order of cleavage is essential for parasite viability. SUB1-mediated processing is essential for merozoite egress. In a second processing step during erythrocyte invasion, p42 is cleaved by SUB2 into p33 and p19; the latter remains attached to the merozoite surface via its GPI-anchor and is endocytosed during the subsequent ring stage.

The protein localises to the cell membrane. Its subcellular location is the secreted. During the asexual blood stage, involved in merozoite egress from host erythrocytes possibly via its interaction with the host cytoskeleton protein spectrin resulting in the destabilization of the host cytoskeleton and thus leading to erythrocyte cell membrane rupture. Involved in the binding to host erythrocytes and is required for host erythrocyte invasion. This chain is Merozoite surface protein 1, found in Plasmodium falciparum (isolate NF7 / Ghana).